A 700-amino-acid chain; its full sequence is Elongation factor G 2 (700 aa).

The 283-residue stretch at 8–290 (ERYRNIGISA…AVIDFLPSPV (283 aa)) folds into the tr-type G domain. GTP is bound by residues 17–24 (AHIDAGKT), 88–92 (DTPGH), and 142–145 (NKMD).

The protein belongs to the TRAFAC class translation factor GTPase superfamily. Classic translation factor GTPase family. EF-G/EF-2 subfamily.

The protein localises to the cytoplasm. Its function is as follows. Catalyzes the GTP-dependent ribosomal translocation step during translation elongation. During this step, the ribosome changes from the pre-translocational (PRE) to the post-translocational (POST) state as the newly formed A-site-bound peptidyl-tRNA and P-site-bound deacylated tRNA move to the P and E sites, respectively. Catalyzes the coordinated movement of the two tRNA molecules, the mRNA and conformational changes in the ribosome. In Burkholderia mallei (strain ATCC 23344), this protein is Elongation factor G 2.